The primary structure comprises 412 residues: Aspartate aminotransferase, cytoplasmic (412 aa).

Ala2 carries the post-translational modification N-acetylalanine. Positions 38, 140, and 194 each coordinate L-aspartate. N6-(pyridoxal phosphate)lysine is present on Lys258. Arg386 is an L-aspartate binding site.

It belongs to the class-I pyridoxal-phosphate-dependent aminotransferase family. Homodimer. Pyridoxal 5'-phosphate is required as a cofactor.

The protein resides in the cytoplasm. The catalysed reaction is L-aspartate + 2-oxoglutarate = oxaloacetate + L-glutamate. The enzyme catalyses L-cysteine + 2-oxoglutarate = 2-oxo-3-sulfanylpropanoate + L-glutamate. It catalyses the reaction (2S)-2-aminobutanoate + 2-oxoglutarate = 2-oxobutanoate + L-glutamate. It carries out the reaction 3-sulfino-L-alanine + 2-oxoglutarate = 3-sulfinopyruvate + L-glutamate. In terms of biological role, biosynthesis of L-glutamate from L-aspartate or L-cysteine. Important regulator of levels of glutamate, the major excitatory neurotransmitter of the vertebrate central nervous system. Acts as a scavenger of glutamate in brain neuroprotection. The aspartate aminotransferase activity is involved in hepatic glucose synthesis during development and in adipocyte glyceroneogenesis. Using L-cysteine as substrate, regulates levels of mercaptopyruvate, an important source of hydrogen sulfide. Mercaptopyruvate is converted into H(2)S via the action of 3-mercaptopyruvate sulfurtransferase (3MST). Hydrogen sulfide is an important synaptic modulator and neuroprotectant in the brain. The chain is Aspartate aminotransferase, cytoplasmic from Gallus gallus (Chicken).